Reading from the N-terminus, the 37-residue chain is Large ribosomal subunit protein bL36 (37 aa).

It belongs to the bacterial ribosomal protein bL36 family.

This chain is Large ribosomal subunit protein bL36, found in Thioalkalivibrio sulfidiphilus (strain HL-EbGR7).